The primary structure comprises 236 residues: Cytochrome c biogenesis ATP-binding export protein CcmA (236 aa).

In terms of domain architecture, ABC transporter spans 14-235; sequence LEATGLQVAR…SAGDRVTGTE (222 aa). Residue 46 to 53 coordinates ATP; sequence GANGSGKT.

It belongs to the ABC transporter superfamily. CcmA exporter (TC 3.A.1.107) family. The complex is composed of two ATP-binding proteins (CcmA) and two transmembrane proteins (CcmB).

Its subcellular location is the cell inner membrane. The catalysed reaction is heme b(in) + ATP + H2O = heme b(out) + ADP + phosphate + H(+). In terms of biological role, part of the ABC transporter complex CcmAB involved in the biogenesis of c-type cytochromes; once thought to export heme, this seems not to be the case, but its exact role is uncertain. Responsible for energy coupling to the transport system. This is Cytochrome c biogenesis ATP-binding export protein CcmA from Alkalilimnicola ehrlichii (strain ATCC BAA-1101 / DSM 17681 / MLHE-1).